The sequence spans 406 residues: Protrudin (406 aa).

Residues 1–71 (MQAAERDGVA…AAEGVRALLR (71 aa)) are Cytoplasmic-facing. The segment at 1–97 (MQAAERDGVA…LLLTLDQAAW (97 aa)) is sufficient for homooligomerization. The tract at residues 1 to 210 (MQAAERDGVA…LYLLPLCWVM (210 aa)) is sufficient for localization to endoplasmic reticulum tubular network. The chain crosses the membrane as a helical span at residues 72–92 (WQRPLCSLLVCLGLNFLLLTL). Position 93 (Asp93) is a topological domain, lumenal. Residues 94-114 (QAAWYSVLALLVLLPALLGYL) form a helical membrane-spanning segment. Residues 115–192 (QETYRVRPSE…NPTVSSQFYG (78 aa)) lie on the Cytoplasmic side of the membrane. The segment at residues 193–213 (ALLGSVCILYLLPLCWVMAIL) is an intramembrane region (helical). Topologically, residues 214 to 406 (NSTLFLGNSQ…CAQCNQMLIK (193 aa)) are cytoplasmic. Positions 239–295 (LGTKPLESAPEPAKPLPTDAPPDRTPTPTSTEDLTPGSVEEAEEAEPDEEFKDAIEE) are disordered. Residues 250–263 (PAKPLPTDAPPDRT) show a composition bias toward pro residues. The span at 278–295 (EEAEEAEPDEEFKDAIEE) shows a compositional bias: acidic residues. The segment at 339–405 (SNNFGTCTGC…VCAQCNQMLI (67 aa)) adopts an FYVE-type zinc-finger fold. Cys345, Cys348, Cys361, Cys364, Cys369, Cys372, Cys397, and Cys400 together coordinate Zn(2+).

As to quaternary structure, can form homooligomers (monomers, dimers and tetramers).

Its subcellular location is the recycling endosome membrane. It is found in the endoplasmic reticulum membrane. The protein resides in the cell projection. It localises to the growth cone membrane. Key regulator of RAB11-dependent vesicular trafficking during neurite extension through polarized membrane transport. Promotes axonal elongation and contributes to the establishment of neuronal cell polarity. Involved in nerve growth factor-induced neurite formation in VAPA-dependent manner. Contributes to both the formation and stabilization of the tubular ER network. Involved in ER morphogenesis by regulating the sheet-to-tubule balance and possibly the density of tubule interconnections. The protein is Protrudin (ZFYVE27) of Gallus gallus (Chicken).